The primary structure comprises 531 residues: Transcription termination/antitermination protein NusA (531 aa).

The S1 motif domain maps to 165–235; that stretch reads GEVIEAKVED…SLWPITLSRS (71 aa). The KH domain maps to 340-410; that stretch reads DTSIEVVVPA…FGIKKRREKI (71 aa). The segment covering 463–475 has biased composition (basic and acidic residues); sequence EKQVTPKEKEKVQ. Positions 463–531 are disordered; the sequence is EKQVTPKEKE…KQTFDSFDDL (69 aa). The span at 476-490 shows a compositional bias: basic residues; it reads PKAKVHSNSHSKKPA. Over residues 502–512 the composition is skewed to basic and acidic residues; it reads ASDKNLKKDQV. Residues 513-531 show a composition bias toward polar residues; sequence DNNQTNPQTKQTFDSFDDL.

This sequence belongs to the NusA family. In terms of assembly, monomer. Binds directly to the core enzyme of the DNA-dependent RNA polymerase and to nascent RNA.

The protein resides in the cytoplasm. Functionally, participates in both transcription termination and antitermination. This Mycoplasma genitalium (strain ATCC 33530 / DSM 19775 / NCTC 10195 / G37) (Mycoplasmoides genitalium) protein is Transcription termination/antitermination protein NusA.